The chain runs to 156 residues: Histidine-containing phosphotransfer protein 2 (156 aa).

An N-acetylmethionine modification is found at Met-1. An HPt domain is found at 40 to 147 (SPDFVSEVLS…NLEKQIIQAG (108 aa)). The residue at position 82 (His-82) is a Phosphohistidine.

As to quaternary structure, interacts with the B-type response regulators ARR1, ARR2 and ARR10. Binds to AHK1, AHK2, AHK3, AHK4, AHK5, ETR1 and CKI1. Post-translationally, two-component system major event consists of a His-to-Asp phosphorelay between a sensor histidine kinase (HK) and a response regulator (RR). In plants, the His-to-Asp phosphorelay involves an additional intermediate named Histidine-containing phosphotransfer protein (HPt). This multistep phosphorelay consists of a His-Asp-His-Asp sequential transfer of a phosphate group between first a His and an Asp of the HK protein, followed by the transfer to a conserved His of the HPt protein and finally the transfer to an Asp in the receiver domain of the RR protein. As to expression, strongly expressed in flowers and roots. Detected also in leaves, siliques and stems.

It is found in the cytoplasm. The protein resides in the cytosol. The protein localises to the nucleus. Its function is as follows. Functions as a two-component phosphorelay mediators between cytokinin sensor histidine kinases and response regulator (B-type ARRs). Plays an important role in propagating cytokinin signal transduction through the multistep His-to-Asp phosphorelay. The sequence is that of Histidine-containing phosphotransfer protein 2 (AHP2) from Arabidopsis thaliana (Mouse-ear cress).